An 806-amino-acid polypeptide reads, in one-letter code: Leucine--tRNA ligase (806 aa).

A 'HIGH' region motif is present at residues 40–51 (PYPSGKGLHVGH). A 'KMSKS' region motif is present at residues 580–584 (KMSKS). Residue lysine 583 participates in ATP binding.

This sequence belongs to the class-I aminoacyl-tRNA synthetase family.

The protein localises to the cytoplasm. It carries out the reaction tRNA(Leu) + L-leucine + ATP = L-leucyl-tRNA(Leu) + AMP + diphosphate. The protein is Leucine--tRNA ligase of Ureaplasma parvum serovar 3 (strain ATCC 27815 / 27 / NCTC 11736).